The sequence spans 130 residues: Small ribosomal subunit protein uS9 (130 aa).

It belongs to the universal ribosomal protein uS9 family.

The chain is Small ribosomal subunit protein uS9 from Geotalea daltonii (strain DSM 22248 / JCM 15807 / FRC-32) (Geobacter daltonii).